The primary structure comprises 485 residues: Glutamate--tRNA ligase (485 aa).

Residues 12 to 22 (PSPTGYMHVGN) carry the 'HIGH' region motif. 4 residues coordinate Zn(2+): C109, C111, C136, and H138. The 'KMSKS' region motif lies at 253-257 (KLSKR). K256 lines the ATP pocket.

It belongs to the class-I aminoacyl-tRNA synthetase family. Glutamate--tRNA ligase type 1 subfamily. Monomer. Zn(2+) serves as cofactor.

It localises to the cytoplasm. The enzyme catalyses tRNA(Glu) + L-glutamate + ATP = L-glutamyl-tRNA(Glu) + AMP + diphosphate. Its function is as follows. Catalyzes the attachment of glutamate to tRNA(Glu) in a two-step reaction: glutamate is first activated by ATP to form Glu-AMP and then transferred to the acceptor end of tRNA(Glu). The chain is Glutamate--tRNA ligase from Clostridium botulinum (strain Eklund 17B / Type B).